A 729-amino-acid polypeptide reads, in one-letter code: Serine/threonine-protein kinase TBK1 (729 aa).

In terms of domain architecture, Protein kinase spans 9–310 (WLLSDILGQG…ETSDVLHRMV (302 aa)). ATP is bound at residue 15–23 (LGQGATANV). Residue lysine 30 forms a Glycyl lysine isopeptide (Lys-Gly) (interchain with G-Cter in ubiquitin) linkage. Lysine 38 is an ATP binding site. Catalysis depends on aspartate 135, which acts as the Proton acceptor. Position 172 is a phosphoserine; by autocatalysis and IKKB (serine 172). A Ubiquitin-like domain is found at 309 to 385 (MVIHVFSLQH…ENPIFVTSRE (77 aa)). Lysine 401 is covalently cross-linked (Glycyl lysine isopeptide (Lys-Gly) (interchain with G-Cter in ubiquitin)). Coiled coils occupy residues 407–657 (DLDG…LQET) and 658–713 (LPQK…ILER). Positions 621–729 (RKMLHLRKQL…DGGLRNVDCL (109 aa)) are interaction with AZI2, TANK and TBKBP1. Lysine 670 participates in a covalent cross-link: Glycyl lysine isopeptide (Lys-Gly) (interchain with G-Cter in ubiquitin). Serine 716 is subject to Phosphoserine.

The protein belongs to the protein kinase superfamily. Ser/Thr protein kinase family. I-kappa-B kinase subfamily. As to quaternary structure, homodimer. Interacts with DDX3X, TIRAP and TRAF2. Part of a ternary complex consisting of TANK, TRAF2 and TBK1. Interacts with AZI2, TANK and TBKBP1; these interactions are mutually exclusive and mediate TBK1 activation. Interacts with GSK3B; this interaction promotes TBK1 self-association and autophosphorylation. Interacts with SIKE1; SIKE1 is associated with TBK1 under physiological condition and dissociated from TBK1 upon viral infection or TLR3 stimulation. Interacts with IRF3, leading to IRF3 phosphorylation. Interacts with RIGI. Interacts with CYLD. Interacts with OPTN and TRAF3. Interacts with SRC. Interacts with the exocyst complex subunit SEC5/EXOC2; this interaction is sufficient to trigger TBK1 activity. Interacts with STING1, leading to STING1 phosphorylation. Interacts with IFIT3 (via N-terminus). Interacts with MAVS; interaction only takes place in the presence of IFIT3 and leads to MAVS phosphorylation. Interacts (via protein kinase domain) with TTLL12 (via TTL domain); the interaction prevents MAVS binding to TBK1. Interacts with TICAM1; this interaction is enhanced in the presence of WDFY1 and leads to TICAM1 phosphorylation. Interacts with TRIM26. Interacts with TRIM23. Interacts with TTC4 and IKBKE. Interacts with HNRNPA2B1. Interacts with DDX3X. Interacts with TRIM14. Interacts with CEP170; efficient complex formation may be dependent on the presence of CCDC61. Interacts with TRAF3IP3. Interacts with HSP90AA1; the interaction mediates TBK1 association with TOMM70. Interacts with TAX1BP1. Interacts with kinase IKBKB; the complex interacts with STAT1, leading to phosphorylation of STAT1 on 'Thr-748' by IKBKB. Interacts with ICOS; this interaction is critical for the maturation of T follicular regulatory cells. Interacts with RNF144B; this interaction prevents TBK1 phosphorylation and subsequent activation. Interacts with ASB8; this interaction promotes TBK1 proteasomal degradation. In terms of processing, autophosphorylation at Ser-172 activates the kinase, and is an essential step for virus-triggered signaling. Phosphorylated by IKBKB/IKKB at Ser-172. Phosphorylation requires homodimerization and ubiquitination at Lys-30 and Lys-401. Dephosphorylated at Ser-172 by PPM1B and this negatively regulates its role in mediating antiviral response. 'Lys-63'-linked polyubiquitination by MIB1 after RNA virus infection, or by NRDP1 after LPS stimulation at Lys-30 and Lys-401, participates in kinase activation. 'Lys-48'-linked polyubiquitination at Lys-670 by DTX4 leads to proteasomal degradation. 'Lys-48'-linked polyubiquitination by TRAIP also leads to proteasomal degradation. 'Lys-48'-linked polyubiquitination by TRAF7; leading to proteasomal degradation. 'Lys-63'-linked polyubiquitination by RNF128 at Lys-30 and Lys-401 leads to the activation of antiviral responses. 'Lys-48'-linked polyubiquitination after 'lys-33'-linked deubiquitination by USP38 promotes TBK1 degradation.

The protein resides in the cytoplasm. It carries out the reaction L-seryl-[protein] + ATP = O-phospho-L-seryl-[protein] + ADP + H(+). It catalyses the reaction L-threonyl-[protein] + ATP = O-phospho-L-threonyl-[protein] + ADP + H(+). With respect to regulation, kinase activity is inhibited competitively by amlexanox. Functionally, serine/threonine kinase that plays an essential role in regulating inflammatory responses to foreign agents. Following activation of toll-like receptors by viral or bacterial components, associates with TRAF3 and TANK and phosphorylates interferon regulatory factors (IRFs) IRF3 and IRF7 as well as DDX3X. This activity allows subsequent homodimerization and nuclear translocation of the IRFs leading to transcriptional activation of pro-inflammatory and antiviral genes including IFNA and IFNB. In order to establish such an antiviral state, TBK1 form several different complexes whose composition depends on the type of cell and cellular stimuli. Thus, several scaffolding molecules including FADD, TRADD, MAVS, AZI2, TANK or TBKBP1/SINTBAD can be recruited to the TBK1-containing-complexes. Plays a key role in IRF3 activation: acts by first phosphorylating innate adapter proteins MAVS, STING1 and TICAM1 on their pLxIS motif, leading to recruitment of IRF3, thereby licensing IRF3 for phosphorylation by TBK1. Under particular conditions, functions as a NF-kappa-B effector by phosphorylating NF-kappa-B inhibitor alpha/NFKBIA, IKBKB or RELA to translocate NF-Kappa-B to the nucleus. Restricts bacterial proliferation by phosphorylating the autophagy receptor OPTN/Optineurin on 'Ser-177', thus enhancing LC3 binding affinity and antibacterial autophagy. Phosphorylates SMCR8 component of the C9orf72-SMCR8 complex, promoting autophagosome maturation. Phosphorylates ATG8 proteins MAP1LC3C and GABARAPL2, thereby preventing their delipidation and premature removal from nascent autophagosomes. Seems to play a role in energy balance regulation by sustaining a state of chronic, low-grade inflammation in obesity, which leads to a negative impact on insulin sensitivity. Acts both as a positive and negative regulator of the mTORC1 complex, depending on the context: activates mTORC1 in response to growth factors by catalyzing phosphorylation of MTOR, while it limits the mTORC1 complex by promoting phosphorylation of RPTOR. Acts as a positive regulator of the mTORC2 complex by mediating phosphorylation of MTOR, leading to increased phosphorylation and activation of AKT1. Phosphorylates and activates AKT1. Involved in the regulation of TNF-induced RIPK1-mediated cell death, probably acting via CYLD phosphorylation that in turn controls RIPK1 ubiquitination status. Also participates in the differentiation of T follicular regulatory cells together with the receptor ICOS. The protein is Serine/threonine-protein kinase TBK1 of Mus musculus (Mouse).